The primary structure comprises 418 residues: MSLLALGINHNTASVALRERVAFGPDCIDRALRELVTQPGVSEAVIVSTCNRTELYCSLEKGQGEQVLHWLQRFHGLDAAEVVSAIYQHQDEEAVRHLMRVACGLDSLVLGEPQILGQIKQSYAHAQQSEAVKGSLERLFQKSFSVAKRVRTDTEIGASAVSVAFAAVSLGRRIFSDLSQTKVLLVGAGETIELVARHLREQNVTRMMVANRTLQRAQLLAEEFGAQVMTLEEIPDYLHEADIVISSTASPLPIIGKGMVERALKARRFKPMFLVDIAVPRDIEAEVDELSDAYLYTVDDLQGIIEQNLETRKRAAAEAEIIVLEERDEFMGWYRSQHSVDLIRDYRHQAQQVADEELQRALLSLQQGENAEQALKAMAHRLTNKLIHAPTQALRQAAAQGDHHQLSRLRQVLGLPQE.

Substrate-binding positions include T49–R52, S107, E112–Q114, and Q118. C50 functions as the Nucleophile in the catalytic mechanism. G187 to I192 contacts NADP(+).

Belongs to the glutamyl-tRNA reductase family. In terms of assembly, homodimer.

The catalysed reaction is (S)-4-amino-5-oxopentanoate + tRNA(Glu) + NADP(+) = L-glutamyl-tRNA(Glu) + NADPH + H(+). It functions in the pathway porphyrin-containing compound metabolism; protoporphyrin-IX biosynthesis; 5-aminolevulinate from L-glutamyl-tRNA(Glu): step 1/2. Its function is as follows. Catalyzes the NADPH-dependent reduction of glutamyl-tRNA(Glu) to glutamate 1-semialdehyde (GSA). The protein is Glutamyl-tRNA reductase of Aeromonas salmonicida (strain A449).